Reading from the N-terminus, the 36-residue chain is HSQDTFTNEYNKYLEAKHAQEFVQWLIKSKRRGGLT.

The protein belongs to the glucagon family.

The protein resides in the secreted. Functionally, glucagon plays a key role in glucose metabolism and homeostasis. Regulates blood glucose by increasing gluconeogenesis and decreasing glycolysis. The protein is Glucagon-2 of Huso dauricus (Kaluga sturgeon).